We begin with the raw amino-acid sequence, 388 residues long: Succinate--CoA ligase [ADP-forming] subunit beta (388 aa).

An ATP-grasp domain is found at 9 to 244 (KQLFSRYGLP…PSQEDPREAQ (236 aa)). ATP contacts are provided by residues K46, 53–55 (GRG), E99, T102, and E107. 2 residues coordinate Mg(2+): N199 and D213. Substrate is bound by residues N264 and 321-323 (GIV).

Belongs to the succinate/malate CoA ligase beta subunit family. Heterotetramer of two alpha and two beta subunits. Mg(2+) is required as a cofactor.

It catalyses the reaction succinate + ATP + CoA = succinyl-CoA + ADP + phosphate. The catalysed reaction is GTP + succinate + CoA = succinyl-CoA + GDP + phosphate. The protein operates within carbohydrate metabolism; tricarboxylic acid cycle; succinate from succinyl-CoA (ligase route): step 1/1. In terms of biological role, succinyl-CoA synthetase functions in the citric acid cycle (TCA), coupling the hydrolysis of succinyl-CoA to the synthesis of either ATP or GTP and thus represents the only step of substrate-level phosphorylation in the TCA. The beta subunit provides nucleotide specificity of the enzyme and binds the substrate succinate, while the binding sites for coenzyme A and phosphate are found in the alpha subunit. The protein is Succinate--CoA ligase [ADP-forming] subunit beta of Proteus mirabilis (strain HI4320).